A 63-amino-acid polypeptide reads, in one-letter code: Large ribosomal subunit protein uL30 (63 aa).

Belongs to the universal ribosomal protein uL30 family. As to quaternary structure, part of the 50S ribosomal subunit.

In Rickettsia massiliae (strain Mtu5), this protein is Large ribosomal subunit protein uL30.